Here is a 312-residue protein sequence, read N- to C-terminus: MLSSYCNPNEPIPREIPSLKAHIFEYMYQYRNWSKFVGDVKKNHGSIDDLEFTITEFKHVHYMNVARVIVHGVEKFNKCCDNINNNDINLDCELTKNIQKHFQGCSEKIPQIYIYGNFCRSIVSGQLYDNINIMFHDDKCSEMFRQFCIPKNYICRNLQWNWSKGNVRGIDYELNFKGYNDYKVHLFLSWCNDMNIVPDNIYFDVDSLYSTISHENIHFMSSLKSLYPDCNVDKIIKNCTNNKFILLDNTKSPTITHPQPFVFSRNIHLKCINVNKEQHIKFLFLKMKSKGWKCLNEDCETPWCILQKDLLH.

It belongs to the mimivirus R69 family.

This is an uncharacterized protein from Acanthamoeba polyphaga mimivirus (APMV).